Here is a 609-residue protein sequence, read N- to C-terminus: Glutamine--fructose-6-phosphate aminotransferase [isomerizing] (609 aa).

The active-site Nucleophile; for GATase activity is the Cys2. Residues 2–219 (CGIFGYIGAK…SGELAVVGLG (218 aa)) enclose the Glutamine amidotransferase type-2 domain. SIS domains are found at residues 280-426 (ISEK…LKQT) and 458-599 (WAND…IDRP). Lys604 acts as the For Fru-6P isomerization activity in catalysis.

In terms of assembly, homodimer.

The protein resides in the cytoplasm. It carries out the reaction D-fructose 6-phosphate + L-glutamine = D-glucosamine 6-phosphate + L-glutamate. Functionally, catalyzes the first step in hexosamine metabolism, converting fructose-6P into glucosamine-6P using glutamine as a nitrogen source. This Chlamydia caviae (strain ATCC VR-813 / DSM 19441 / 03DC25 / GPIC) (Chlamydophila caviae) protein is Glutamine--fructose-6-phosphate aminotransferase [isomerizing].